We begin with the raw amino-acid sequence, 241 residues long: Probable transcriptional regulatory protein azo0574 (241 aa).

The segment at 1 to 21 (MAGHSKWANIQHRKGRQDAKR) is disordered.

Belongs to the TACO1 family.

The protein localises to the cytoplasm. This chain is Probable transcriptional regulatory protein azo0574, found in Azoarcus sp. (strain BH72).